The sequence spans 348 residues: Oxygen-dependent coproporphyrinogen-III oxidase (348 aa).

Serine 104 provides a ligand contact to substrate. A divalent metal cation-binding residues include histidine 108 and histidine 118. The active-site Proton donor is the histidine 118. A substrate-binding site is contributed by 120–122; it reads NYR. 2 residues coordinate a divalent metal cation: histidine 152 and histidine 182. Residues 272-307 are important for dimerization; it reads YAEFNLVWDRGTIFGLQTNGRTESILMSLPPLARWE.

It belongs to the aerobic coproporphyrinogen-III oxidase family. As to quaternary structure, homodimer. It depends on a divalent metal cation as a cofactor.

It is found in the cytoplasm. The catalysed reaction is coproporphyrinogen III + O2 + 2 H(+) = protoporphyrinogen IX + 2 CO2 + 2 H2O. It functions in the pathway porphyrin-containing compound metabolism; protoporphyrin-IX biosynthesis; protoporphyrinogen-IX from coproporphyrinogen-III (O2 route): step 1/1. Its function is as follows. Involved in the heme and chlorophyll biosynthesis. Catalyzes the aerobic oxidative decarboxylation of propionate groups of rings A and B of coproporphyrinogen-III to yield the vinyl groups in protoporphyrinogen-IX. The polypeptide is Oxygen-dependent coproporphyrinogen-III oxidase (Prochlorococcus marinus (strain NATL1A)).